The sequence spans 236 residues: Carboxymethylenebutenolidase (236 aa).

Residues cysteine 123, aspartate 171, and histidine 202 contribute to the active site.

Belongs to the dienelactone hydrolase family. Monomer.

It catalyses the reaction 2-(5-oxo-2,5-dihydrofuran-2-ylidene)acetate + H2O = 4-oxohex-2-enedioate + H(+). It functions in the pathway aromatic compound metabolism; 3-chlorocatechol degradation. Its function is as follows. Ring cleavage of cyclic ester dienelactone to produce maleylacetate. The polypeptide is Carboxymethylenebutenolidase (clcD) (Pseudomonas knackmussii (strain DSM 6978 / CCUG 54928 / LMG 23759 / B13)).